We begin with the raw amino-acid sequence, 373 residues long: Probable pectin lyase D (373 aa).

Residues 1–24 (MKYAAALTAVAALAARAAAVGVSG) form the signal peptide. 2 disulfides stabilise this stretch: C82–C101 and C91–C225. N-linked (GlcNAc...) asparagine glycosylation occurs at N128. Residue R255 is part of the active site. An N-linked (GlcNAc...) asparagine glycan is attached at N274. Residues C321 and C329 are joined by a disulfide bond. The N-linked (GlcNAc...) asparagine glycan is linked to N348. The span at 354–366 (LPSADAASTSPAS) shows a compositional bias: low complexity. The tract at residues 354–373 (LPSADAASTSPASNAGQGNL) is disordered.

Belongs to the polysaccharide lyase 1 family.

It localises to the secreted. It catalyses the reaction Eliminative cleavage of (1-&gt;4)-alpha-D-galacturonan methyl ester to give oligosaccharides with 4-deoxy-6-O-methyl-alpha-D-galact-4-enuronosyl groups at their non-reducing ends.. In terms of biological role, pectinolytic enzymes consist of four classes of enzymes: pectin lyase, polygalacturonase, pectin methylesterase and rhamnogalacturonase. Among pectinolytic enzymes, pectin lyase is the most important in depolymerization of pectin, since it cleaves internal glycosidic bonds of highly methylated pectins. The sequence is that of Probable pectin lyase D (pelD) from Aspergillus niger (strain ATCC MYA-4892 / CBS 513.88 / FGSC A1513).